The following is a 211-amino-acid chain: 3-demethoxyubiquinol 3-hydroxylase (211 aa).

6 residues coordinate Fe cation: glutamate 60, glutamate 90, histidine 93, glutamate 142, glutamate 174, and histidine 177.

This sequence belongs to the COQ7 family. Fe cation serves as cofactor.

Its subcellular location is the cell membrane. The catalysed reaction is a 5-methoxy-2-methyl-3-(all-trans-polyprenyl)benzene-1,4-diol + AH2 + O2 = a 3-demethylubiquinol + A + H2O. The protein operates within cofactor biosynthesis; ubiquinone biosynthesis. Its function is as follows. Catalyzes the hydroxylation of 2-nonaprenyl-3-methyl-6-methoxy-1,4-benzoquinol during ubiquinone biosynthesis. The sequence is that of 3-demethoxyubiquinol 3-hydroxylase from Acinetobacter baumannii (strain AB307-0294).